Here is a 131-residue protein sequence, read N- to C-terminus: Small ribosomal subunit protein uS8 (131 aa).

Belongs to the universal ribosomal protein uS8 family. As to quaternary structure, part of the 30S ribosomal subunit. Contacts proteins S5 and S12.

In terms of biological role, one of the primary rRNA binding proteins, it binds directly to 16S rRNA central domain where it helps coordinate assembly of the platform of the 30S subunit. The protein is Small ribosomal subunit protein uS8 of Variovorax paradoxus (strain S110).